Reading from the N-terminus, the 291-residue chain is Ribosomal RNA small subunit methyltransferase H (291 aa).

S-adenosyl-L-methionine is bound by residues 31–33 (GGH), aspartate 50, phenylalanine 77, aspartate 98, and glutamine 105.

It belongs to the methyltransferase superfamily. RsmH family.

The protein resides in the cytoplasm. The catalysed reaction is cytidine(1402) in 16S rRNA + S-adenosyl-L-methionine = N(4)-methylcytidine(1402) in 16S rRNA + S-adenosyl-L-homocysteine + H(+). Specifically methylates the N4 position of cytidine in position 1402 (C1402) of 16S rRNA. This Endomicrobium trichonymphae protein is Ribosomal RNA small subunit methyltransferase H.